A 132-amino-acid chain; its full sequence is Acyl carrier protein 3, chloroplastic (132 aa).

The transit peptide at 1–49 (MASIAGSAVSFAKPVKAINTNSLSFSGARRGNAFLRLQPVPMRFAVCCS) directs the protein to the chloroplast. Residues 52–127 (QDTVEKVCEI…DAATLIDKLV (76 aa)) form the Carrier domain. The residue at position 87 (Ser87) is an O-(pantetheine 4'-phosphoryl)serine.

Belongs to the acyl carrier protein (ACP) family. Post-translationally, 4'-phosphopantetheine is transferred from CoA to a specific serine of apo-ACP by acpS. This modification is essential for activity because fatty acids are bound in thioester linkage to the sulfhydryl of the prosthetic group.

It localises to the plastid. It is found in the chloroplast. It participates in lipid metabolism; fatty acid biosynthesis. Functionally, carrier of the growing fatty acid chain in fatty acid biosynthesis. This Hordeum vulgare (Barley) protein is Acyl carrier protein 3, chloroplastic (ACL1.3).